A 283-amino-acid polypeptide reads, in one-letter code: Small ribosomal subunit protein uS3 (283 aa).

The KH type-2 domain maps to 39–107; it reads VRAYLKTKLK…PVHVNIEEIR (69 aa). Positions 219–283 are disordered; it reads ASDDDKKRRG…AAVSAEKAGE (65 aa). The segment covering 221–236 has biased composition (basic and acidic residues); sequence DDDKKRRGPRRDDGKP. The span at 237–260 shows a compositional bias: low complexity; sequence SGRPRAPRPEGQPGAAAPGSAPAA.

The protein belongs to the universal ribosomal protein uS3 family. Part of the 30S ribosomal subunit. Forms a tight complex with proteins S10 and S14.

Functionally, binds the lower part of the 30S subunit head. Binds mRNA in the 70S ribosome, positioning it for translation. This is Small ribosomal subunit protein uS3 from Janthinobacterium sp. (strain Marseille) (Minibacterium massiliensis).